The sequence spans 334 residues: GTP 3',8-cyclase (334 aa).

The 237-residue stretch at Arg8–Ala244 folds into the Radical SAM core domain. Arg17 is a GTP binding site. Cys24 and Cys28 together coordinate [4Fe-4S] cluster. Residue Tyr30 coordinates S-adenosyl-L-methionine. [4Fe-4S] cluster is bound at residue Cys31. Arg70 serves as a coordination point for GTP. An S-adenosyl-L-methionine-binding site is contributed by Gly74. A GTP-binding site is contributed by Thr101. Position 125 (Ser125) interacts with S-adenosyl-L-methionine. A GTP-binding site is contributed by Lys163. Met197 is an S-adenosyl-L-methionine binding site. Residues Cys261 and Cys264 each coordinate [4Fe-4S] cluster. Arg266–Arg268 is a GTP binding site. Cys278 is a [4Fe-4S] cluster binding site.

The protein belongs to the radical SAM superfamily. MoaA family. In terms of assembly, monomer and homodimer. [4Fe-4S] cluster serves as cofactor.

It catalyses the reaction GTP + AH2 + S-adenosyl-L-methionine = (8S)-3',8-cyclo-7,8-dihydroguanosine 5'-triphosphate + 5'-deoxyadenosine + L-methionine + A + H(+). The protein operates within cofactor biosynthesis; molybdopterin biosynthesis. Functionally, catalyzes the cyclization of GTP to (8S)-3',8-cyclo-7,8-dihydroguanosine 5'-triphosphate. This is GTP 3',8-cyclase from Xanthomonas axonopodis pv. citri (strain 306).